The following is a 300-amino-acid chain: Epimerase family protein MW0731 (300 aa).

It belongs to the NAD(P)-dependent epimerase/dehydratase family. SDR39U1 subfamily.

The protein is Epimerase family protein MW0731 of Staphylococcus aureus (strain MW2).